Reading from the N-terminus, the 367-residue chain is Peptide chain release factor 2 (367 aa).

Gln-250 carries the N5-methylglutamine modification.

The protein belongs to the prokaryotic/mitochondrial release factor family. Post-translationally, methylated by PrmC. Methylation increases the termination efficiency of RF2.

It localises to the cytoplasm. In terms of biological role, peptide chain release factor 2 directs the termination of translation in response to the peptide chain termination codons UGA and UAA. The chain is Peptide chain release factor 2 from Mycobacteroides abscessus (strain ATCC 19977 / DSM 44196 / CCUG 20993 / CIP 104536 / JCM 13569 / NCTC 13031 / TMC 1543 / L948) (Mycobacterium abscessus).